Consider the following 200-residue polypeptide: Cytochrome c biogenesis ATP-binding export protein CcmA (200 aa).

The ABC transporter domain occupies 2 to 200 (LDVIELDFDY…NKADYEEYHL (199 aa)). 34–41 (GSNGAGKT) is a binding site for ATP.

It belongs to the ABC transporter superfamily. CcmA exporter (TC 3.A.1.107) family. In terms of assembly, the complex is composed of two ATP-binding proteins (CcmA) and two transmembrane proteins (CcmB).

It localises to the cell inner membrane. It catalyses the reaction heme b(in) + ATP + H2O = heme b(out) + ADP + phosphate + H(+). In terms of biological role, part of the ABC transporter complex CcmAB involved in the biogenesis of c-type cytochromes; once thought to export heme, this seems not to be the case, but its exact role is uncertain. Responsible for energy coupling to the transport system. The protein is Cytochrome c biogenesis ATP-binding export protein CcmA of Legionella pneumophila (strain Lens).